The sequence spans 394 residues: Chorismate synthase (394 aa).

Arg40 and Arg46 together coordinate NADP(+). FMN contacts are provided by residues 135–137 (RAS), 255–256 (QA), Gly302, 317–321 (KPISS), and Arg343.

The protein belongs to the chorismate synthase family. Homotetramer. It depends on FMNH2 as a cofactor.

It catalyses the reaction 5-O-(1-carboxyvinyl)-3-phosphoshikimate = chorismate + phosphate. It functions in the pathway metabolic intermediate biosynthesis; chorismate biosynthesis; chorismate from D-erythrose 4-phosphate and phosphoenolpyruvate: step 7/7. Catalyzes the anti-1,4-elimination of the C-3 phosphate and the C-6 proR hydrogen from 5-enolpyruvylshikimate-3-phosphate (EPSP) to yield chorismate, which is the branch point compound that serves as the starting substrate for the three terminal pathways of aromatic amino acid biosynthesis. This reaction introduces a second double bond into the aromatic ring system. The sequence is that of Chorismate synthase from Frankia alni (strain DSM 45986 / CECT 9034 / ACN14a).